The sequence spans 496 residues: Zinc finger and SCAN domain-containing protein 5C (496 aa).

Polar residues predominate over residues 1–19 (MAANCTSSWSLGESCNSPG). A disordered region spans residues 1–38 (MAANCTSSWSLGESCNSPGSEPPQSMPSPATQLGNHDS). The SCAN box domain maps to 44-126 (HVNFRMFSCP…DLLRNNRRPK (83 aa)). 2 disordered regions span residues 149 to 188 (EAPA…TLPR) and 203 to 347 (PETT…HPSG). Residues 161 to 171 (VSSQRTSSVNQ) are compositionally biased toward polar residues. Positions 210 to 223 (GDPKALRPKPTLEK) are enriched in basic and acidic residues. The segment covering 234-247 (GLTSPEPQLPNSPT) has biased composition (polar residues). The span at 253-263 (KEGKEPQKRAS) shows a compositional bias: basic and acidic residues. 5 consecutive C2H2-type zinc fingers follow at residues 356-378 (FACE…TRSH), 384-406 (FQCN…QRTH), 412-434 (YTCD…KRSH), 440-462 (FECK…QRIH), and 468-490 (HKCS…QKTH).

The protein resides in the nucleus. Its function is as follows. May be involved in transcriptional regulation. In Homo sapiens (Human), this protein is Zinc finger and SCAN domain-containing protein 5C.